A 175-amino-acid polypeptide reads, in one-letter code: Nucleoside diphosphate kinase 6 (175 aa).

ATP contacts are provided by Lys8, Phe57, Arg85, Thr91, Arg105, and Asn115. His118 (pros-phosphohistidine intermediate) is an active-site residue.

This sequence belongs to the NDK family. The cofactor is Mg(2+).

It catalyses the reaction a 2'-deoxyribonucleoside 5'-diphosphate + ATP = a 2'-deoxyribonucleoside 5'-triphosphate + ADP. The enzyme catalyses a ribonucleoside 5'-diphosphate + ATP = a ribonucleoside 5'-triphosphate + ADP. Functionally, major role in the synthesis of nucleoside triphosphates other than ATP. The ATP gamma phosphate is transferred to the NDP beta phosphate via a ping-pong mechanism, using a phosphorylated active-site intermediate. In Rattus norvegicus (Rat), this protein is Nucleoside diphosphate kinase 6 (Nme6).